We begin with the raw amino-acid sequence, 379 residues long: tRNA (guanine(26)-N(2))-dimethyltransferase (379 aa).

The tract at residues 1–26 (MECREITEGSTTFTAPVQDETTQFPP) is disordered. Positions 4–369 (REITEGSTTF…APLPLIEEKI (366 aa)) constitute a Trm1 methyltransferase domain. Residues 8–25 (EGSTTFTAPVQDETTQFP) are compositionally biased toward polar residues. Residues R41, R66, D82, D108, and A109 each contribute to the S-adenosyl-L-methionine site. Positions 237, 240, 257, and 260 each coordinate Zn(2+).

The protein belongs to the class I-like SAM-binding methyltransferase superfamily. Trm1 family.

The enzyme catalyses guanosine(26) in tRNA + 2 S-adenosyl-L-methionine = N(2)-dimethylguanosine(26) in tRNA + 2 S-adenosyl-L-homocysteine + 2 H(+). In terms of biological role, dimethylates a single guanine residue at position 26 of a number of tRNAs using S-adenosyl-L-methionine as donor of the methyl groups. This is tRNA (guanine(26)-N(2))-dimethyltransferase from Methanocorpusculum labreanum (strain ATCC 43576 / DSM 4855 / Z).